Reading from the N-terminus, the 338-residue chain is Ferrochelatase (338 aa).

Positions 189 and 294 each coordinate Fe cation.

Belongs to the ferrochelatase family.

Its subcellular location is the cytoplasm. It carries out the reaction heme b + 2 H(+) = protoporphyrin IX + Fe(2+). Its pathway is porphyrin-containing compound metabolism; protoheme biosynthesis; protoheme from protoporphyrin-IX: step 1/1. Its function is as follows. Catalyzes the ferrous insertion into protoporphyrin IX. The protein is Ferrochelatase of Pseudomonas putida (strain ATCC 700007 / DSM 6899 / JCM 31910 / BCRC 17059 / LMG 24140 / F1).